The chain runs to 323 residues: Voltage-dependent calcium channel gamma-2 subunit (323 aa).

The chain crosses the membrane as a helical span at residues 10–30 (MLLTTVGAFAAFSLMTIAVGT). A glycan (N-linked (GlcNAc...) asparagine) is linked at asparagine 48. Transmembrane regions (helical) follow at residues 104–124 (SSIF…CIAA), 134–154 (IILS…IGII), and 182–202 (FGAL…HMFI). Positions 233 to 261 (YQRRSRSSSRSTEPSHSRDASPVGVKGFN) are disordered. Residue serine 253 is modified to Phosphoserine. Residue tyrosine 271 is modified to Phosphotyrosine. Threonine 321 is modified (phosphothreonine; by PKA).

Belongs to the PMP-22/EMP/MP20 family. CACNG subfamily. In terms of assembly, the L-type calcium channel is composed of five subunits: alpha-1, alpha-2/delta, beta and gamma. Interacts with the PDZ domains of DLG4/PSD-95 and DLG1/SAP97. May interact with GOPC. Acts as an auxiliary subunit for AMPA-selective glutamate receptors (AMPARs). Found in a complex with GRIA1, GRIA2, GRIA3, GRIA4, CNIH2, CNIH3, CACNG3, CACNG4, CACNG5, CACNG7 and CACNG8. Interacts with GRIA1 and GRIA2. Interacts with MPP2. Phosphorylation of Thr-321 by PKA impairs interaction with DLG1 and DLG4. In terms of tissue distribution, brain.

The protein localises to the membrane. It localises to the synapse. The protein resides in the synaptosome. Regulates the trafficking and gating properties of AMPA-selective glutamate receptors (AMPARs). Promotes their targeting to the cell membrane and synapses and modulates their gating properties by slowing their rates of activation, deactivation and desensitization. Does not show subunit-specific AMPA receptor regulation and regulates all AMPAR subunits. Thought to stabilize the calcium channel in an inactivated (closed) state. In Mus musculus (Mouse), this protein is Voltage-dependent calcium channel gamma-2 subunit (Cacng2).